The chain runs to 163 residues: uncharacterized protein (163 aa).

This is an uncharacterized protein from Rickettsia prowazekii (strain Madrid E).